Here is a 318-residue protein sequence, read N- to C-terminus: Myoblast determination protein 1 (318 aa).

M1 is covalently cross-linked (Peptide (Met-Gly) (interchain with G-Cter in ubiquitin)). K104 is modified (N6-methyllysine; by EHMT2). The 52-residue stretch at 109–160 folds into the bHLH domain; it reads DRRKAATMRERRRLSKVNEAFETLKRCTSSNPNQRLPKVEILRNAIRYIEGL. Disordered stretches follow at residues 174 to 224 and 266 to 318; these read AAAA…RRRN and APAL…YQVL. The segment covering 197 to 207 has biased composition (polar residues); that stretch reads SDASSPRSNCS. Positions 266–276 are enriched in low complexity; it reads APALLLADAPP.

As to quaternary structure, efficient DNA binding requires dimerization with another bHLH protein. Seems to form active heterodimers with ITF-2. Interacts with SUV39H1. Interacts with DDX5. Interacts with CHD2. Interacts with TSC22D3. Interacts with SETD3. Interacts with P-TEFB complex; promotes the transcriptional activity of MYOD1 through its CDK9-mediated phosphorylation. Interacts with CSRP3. Interacts with NUPR1. Post-translationally, phosphorylated by CDK9. This phosphorylation promotes its function in muscle differentiation. In terms of processing, acetylated by a complex containing EP300 and PCAF. The acetylation is essential to activate target genes. Conversely, its deacetylation by SIRT1 inhibits its function. Ubiquitinated on the N-terminus; which is required for proteasomal degradation. Post-translationally, methylation at Lys-104 by EHMT2/G9a inhibits myogenic activity.

The protein resides in the nucleus. In terms of biological role, acts as a transcriptional activator that promotes transcription of muscle-specific target genes and plays a role in muscle differentiation. Together with MYF5 and MYOG, co-occupies muscle-specific gene promoter core region during myogenesis. Induces fibroblasts to differentiate into myoblasts. Interacts with and is inhibited by the twist protein. This interaction probably involves the basic domains of both proteins. The protein is Myoblast determination protein 1 (MYOD1) of Bos taurus (Bovine).